The sequence spans 416 residues: Histidine--tRNA ligase (416 aa).

The protein belongs to the class-II aminoacyl-tRNA synthetase family. As to quaternary structure, homodimer.

Its subcellular location is the cytoplasm. It carries out the reaction tRNA(His) + L-histidine + ATP = L-histidyl-tRNA(His) + AMP + diphosphate + H(+). The chain is Histidine--tRNA ligase from Clostridium kluyveri (strain NBRC 12016).